The chain runs to 185 residues: Hypoxanthine/guanine phosphoribosyltransferase (185 aa).

The protein belongs to the purine/pyrimidine phosphoribosyltransferase family. Archaeal HPRT subfamily. Homodimer.

It is found in the cytoplasm. The catalysed reaction is IMP + diphosphate = hypoxanthine + 5-phospho-alpha-D-ribose 1-diphosphate. It carries out the reaction GMP + diphosphate = guanine + 5-phospho-alpha-D-ribose 1-diphosphate. Its pathway is purine metabolism; IMP biosynthesis via salvage pathway; IMP from hypoxanthine: step 1/1. Catalyzes a salvage reaction resulting in the formation of IMP that is energically less costly than de novo synthesis. The sequence is that of Hypoxanthine/guanine phosphoribosyltransferase from Methanococcus vannielii (strain ATCC 35089 / DSM 1224 / JCM 13029 / OCM 148 / SB).